The chain runs to 684 residues: Sec1 family domain-containing protein 2 (684 aa).

This sequence belongs to the STXBP/unc-18/SEC1 family.

Its function is as follows. May be involved in protein transport. This chain is Sec1 family domain-containing protein 2 (SCFD2), found in Homo sapiens (Human).